We begin with the raw amino-acid sequence, 453 residues long: Tubulin delta chain (453 aa).

143-149 (AGGTGSG) contributes to the GTP binding site.

The protein belongs to the tubulin family. As to quaternary structure, found in a complex with TEDC1, TEDC2, TUBE1 and TUBD1.

It localises to the nucleus. The protein localises to the cytoplasm. It is found in the cytoskeleton. Its subcellular location is the microtubule organizing center. The protein resides in the centrosome. It localises to the centriole. The protein localises to the cell projection. It is found in the cilium. Its function is as follows. Acts as a positive regulator of hedgehog signaling and regulates ciliary function. The protein is Tubulin delta chain (TUBD1) of Canis lupus familiaris (Dog).